A 1355-amino-acid polypeptide reads, in one-letter code: Probable aldehyde oxidase 2 (1355 aa).

The 2Fe-2S ferredoxin-type domain maps to 9-96 (RPVVVTVNGE…HCAVTTSEGI (88 aa)). The [2Fe-2S] cluster site is built by Cys-48, Cys-53, Cys-56, and Cys-78. One can recognise an FAD-binding PCMH-type domain in the interval 244-422 (VAVTGDGWFH…VSISIPDWGS (179 aa)). A disordered region spans residues 544-577 (PENANVPNGSCTNGTANGSANSSPEKHSNVDSSD). Polar residues predominate over residues 548 to 566 (NVPNGSCTNGTANGSANSS).

The protein belongs to the xanthine dehydrogenase family. Aldehyde oxidases (AO) are homodimers and heterodimers of AO subunits. The cofactor is [2Fe-2S] cluster. Requires FAD as cofactor. Mo-molybdopterin is required as a cofactor.

It catalyses the reaction an aldehyde + O2 + H2O = a carboxylate + H2O2 + H(+). The chain is Probable aldehyde oxidase 2 from Oryza sativa subsp. japonica (Rice).